The primary structure comprises 202 residues: MSRYRGPRLRIVRRLGDLPGLTRKSARRAYPPGQHGQNRKKRSEYAIRLEEKQKLRFNYGLTEKQLLRYVRKARRVTGSTGQVLLQLLEMRLDNTVFRLGIAPTIPAARQLVNHGHVTVNGRVVNIASYQCRPGEVIAVRDRAQSRKLVEANLQYPGLANLPSHLEFDKNKLVGKVNSVIEREWVALQVNELLVVEYYSRQA.

The disordered stretch occupies residues Thr22–Ser43. One can recognise an S4 RNA-binding domain in the interval Met90 to Asn152.

This sequence belongs to the universal ribosomal protein uS4 family. As to quaternary structure, part of the 30S ribosomal subunit. Contacts protein S5. The interaction surface between S4 and S5 is involved in control of translational fidelity.

One of the primary rRNA binding proteins, it binds directly to 16S rRNA where it nucleates assembly of the body of the 30S subunit. In terms of biological role, with S5 and S12 plays an important role in translational accuracy. In Nostoc punctiforme (strain ATCC 29133 / PCC 73102), this protein is Small ribosomal subunit protein uS4.